The chain runs to 192 residues: tRNA (pseudouridine(54)-N(1))-methyltransferase (192 aa).

Leucine 114 and glycine 138 together coordinate S-adenosyl-L-methionine.

The protein belongs to the methyltransferase superfamily. TrmY family. As to quaternary structure, homodimer.

The protein localises to the cytoplasm. It catalyses the reaction pseudouridine(54) in tRNA + S-adenosyl-L-methionine = N(1)-methylpseudouridine(54) in tRNA + S-adenosyl-L-homocysteine + H(+). In terms of biological role, specifically catalyzes the N1-methylation of pseudouridine at position 54 (Psi54) in tRNAs. This chain is tRNA (pseudouridine(54)-N(1))-methyltransferase, found in Aeropyrum pernix (strain ATCC 700893 / DSM 11879 / JCM 9820 / NBRC 100138 / K1).